The sequence spans 161 residues: Large ribosomal subunit protein uL10 (161 aa).

It belongs to the universal ribosomal protein uL10 family. In terms of assembly, part of the ribosomal stalk of the 50S ribosomal subunit. The N-terminus interacts with L11 and the large rRNA to form the base of the stalk. The C-terminus forms an elongated spine to which L12 dimers bind in a sequential fashion forming a multimeric L10(L12)X complex.

Functionally, forms part of the ribosomal stalk, playing a central role in the interaction of the ribosome with GTP-bound translation factors. The chain is Large ribosomal subunit protein uL10 (rplJ) from Wigglesworthia glossinidia brevipalpis.